The chain runs to 500 residues: Aspartyl/glutamyl-tRNA(Asn/Gln) amidotransferase subunit B (500 aa).

The protein belongs to the GatB/GatE family. GatB subfamily. Heterotrimer of A, B and C subunits.

It catalyses the reaction L-glutamyl-tRNA(Gln) + L-glutamine + ATP + H2O = L-glutaminyl-tRNA(Gln) + L-glutamate + ADP + phosphate + H(+). It carries out the reaction L-aspartyl-tRNA(Asn) + L-glutamine + ATP + H2O = L-asparaginyl-tRNA(Asn) + L-glutamate + ADP + phosphate + 2 H(+). Functionally, allows the formation of correctly charged Asn-tRNA(Asn) or Gln-tRNA(Gln) through the transamidation of misacylated Asp-tRNA(Asn) or Glu-tRNA(Gln) in organisms which lack either or both of asparaginyl-tRNA or glutaminyl-tRNA synthetases. The reaction takes place in the presence of glutamine and ATP through an activated phospho-Asp-tRNA(Asn) or phospho-Glu-tRNA(Gln). The protein is Aspartyl/glutamyl-tRNA(Asn/Gln) amidotransferase subunit B of Rhizobium johnstonii (strain DSM 114642 / LMG 32736 / 3841) (Rhizobium leguminosarum bv. viciae).